Reading from the N-terminus, the 562-residue chain is Formate--tetrahydrofolate ligase (562 aa).

77–84 (TPAGEGKS) contacts ATP.

It belongs to the formate--tetrahydrofolate ligase family.

The catalysed reaction is (6S)-5,6,7,8-tetrahydrofolate + formate + ATP = (6R)-10-formyltetrahydrofolate + ADP + phosphate. Its pathway is one-carbon metabolism; tetrahydrofolate interconversion. The chain is Formate--tetrahydrofolate ligase from Corynebacterium jeikeium (strain K411).